A 441-amino-acid chain; its full sequence is FAM10 family protein At4g22670 (441 aa).

The interval 41-114 is disordered; it reads KIPTGVHEED…PQKMGDSSVE (74 aa). The span at 46–55 shows a compositional bias: basic and acidic residues; the sequence is VHEEDKDTKP. Acidic residues-rich tracts occupy residues 61-71 and 78-102; these read EESDDDMDETE and EEEE…EPDN. Residues Ser-63 and Ser-89 each carry the phosphoserine modification. TPR repeat units follow at residues 121–156, 158–190, and 191–224; these read EAAQ…NPTS, IMYG…NPDS, and AKGY…DYDE. Residues 236-285 adopt a coiled-coil conformation; it reads NAHKLEEHRRKYDRLRKEREDKKAERDRLRRRAEAQAAYDKAKKEEQSSS. The segment covering 244-282 has biased composition (basic and acidic residues); that stretch reads RRKYDRLRKEREDKKAERDRLRRRAEAQAAYDKAKKEEQ. The tract at residues 244–314 is disordered; sequence RRKYDRLRKE…MPGGFPGGMG (71 aa). The span at 289 to 314 shows a compositional bias: gly residues; the sequence is SGGGFPGGMPGGFPGGMPGGFPGGMG. Residues 391–430 form the STI1 domain; the sequence is DPELMTAFSDPEVMAALQDVMKNPANLAKHQANPKVAPVI.

It belongs to the FAM10 family.

This Arabidopsis thaliana (Mouse-ear cress) protein is FAM10 family protein At4g22670.